Here is a 354-residue protein sequence, read N- to C-terminus: Rhodopsin (354 aa).

At 1–36 (MNGTEGPYFNVPMVNTTGIVRSPYEYPQYYLVSPAA) the chain is on the extracellular side. 2 N-linked (GlcNAc...) asparagine glycosylation sites follow: N2 and N15. A helical transmembrane segment spans residues 37 to 61 (YAALGAYMFFLILVGFPINFLTLYV). The Cytoplasmic segment spans residues 62 to 73 (TLEHKKLRTPLN). A helical transmembrane segment spans residues 74–96 (YILLNLAVADLFMVFGGFTTTMY). Over 97–110 (TSMHGYFVLGRLGC) the chain is Extracellular. C110 and C187 are oxidised to a cystine. The chain crosses the membrane as a helical span at residues 111–133 (NLEGFFATLGGEIGLWSLVVLAI). A 'Ionic lock' involved in activated form stabilization motif is present at residues 134–136 (ERW). The Cytoplasmic portion of the chain corresponds to 134 to 152 (ERWVVVCKPISNFRFGENH). The helical transmembrane segment at 153–173 (AIMGLVFTWIMAASCAVPPLV) threads the bilayer. Residues 174-202 (GWSRYIPEGMQCSCGVDYYTRAEGFNNES) are Extracellular-facing. The helical transmembrane segment at 203–224 (FVVYMFVCHFLIPLIVVFFCYG) threads the bilayer. Residues 225–252 (RLLCAVKEAAAAQQESETTQRAEREVTR) lie on the Cytoplasmic side of the membrane. A helical transmembrane segment spans residues 253-274 (MVVIMVIGFLVCWLPYASVAWY). Residues 275–286 (IFTNQGSEFGPL) lie on the Extracellular side of the membrane. The chain crosses the membrane as a helical span at residues 287–308 (FMTIPAFFAKSSSIYNPAIYIC). K296 is modified (N6-(retinylidene)lysine). Topologically, residues 309 to 354 (MNKQFRNCMITTLCCGKNPFEEEEGASTTASKTEASSVSSSSVSPA) are cytoplasmic. Residues C322 and C323 are each lipidated (S-palmitoyl cysteine). The disordered stretch occupies residues 332–354 (EGASTTASKTEASSVSSSSVSPA). Residues 334-354 (ASTTASKTEASSVSSSSVSPA) are compositionally biased toward low complexity.

This sequence belongs to the G-protein coupled receptor 1 family. Opsin subfamily. In terms of processing, phosphorylated on some or all of the serine and threonine residues present in the C-terminal region. Contains one covalently linked retinal chromophore.

It is found in the membrane. Its subcellular location is the cell projection. It localises to the cilium. The protein localises to the photoreceptor outer segment. In terms of biological role, photoreceptor required for image-forming vision at low light intensity. While most salt water fish species use retinal as chromophore, most freshwater fish use 3-dehydroretinal, or a mixture of retinal and 3-dehydroretinal. Light-induced isomerization of 11-cis to all-trans retinal triggers a conformational change that activates signaling via G-proteins. Subsequent receptor phosphorylation mediates displacement of the bound G-protein alpha subunit by arrestin and terminates signaling. The sequence is that of Rhodopsin (rho) from Oryzias latipes (Japanese rice fish).